The primary structure comprises 150 residues: Endoribonuclease YbeY (150 aa).

Zn(2+) is bound by residues His112, His116, and His122.

It belongs to the endoribonuclease YbeY family. The cofactor is Zn(2+).

Its subcellular location is the cytoplasm. Its function is as follows. Single strand-specific metallo-endoribonuclease involved in late-stage 70S ribosome quality control and in maturation of the 3' terminus of the 16S rRNA. The protein is Endoribonuclease YbeY of Geobacter sulfurreducens (strain ATCC 51573 / DSM 12127 / PCA).